A 107-amino-acid polypeptide reads, in one-letter code: Cytochrome c2 (107 aa).

Gln-1 is modified (pyrrolidone carboxylic acid). Residues Cys-13, Cys-16, His-17, and Met-79 each coordinate heme c.

Belongs to the cytochrome c family. Post-translationally, binds 1 heme c group covalently per subunit.

The protein resides in the periplasm. Its function is as follows. Cytochrome c2 is found mainly in purple, non-sulfur, photosynthetic bacteria where it functions as the electron donor to the oxidized bacteriochlorophyll in the photophosphorylation pathway. However, it may also have a role in the respiratory chain and is found in some non-photosynthetic bacteria. The sequence is that of Cytochrome c2 from Rhodoplanes tepidamans (Rhodoplanes cryptolactis).